Here is a 103-residue protein sequence, read N- to C-terminus: Small ribosomal subunit protein bS6c (103 aa).

This sequence belongs to the bacterial ribosomal protein bS6 family.

The protein localises to the plastid. The protein resides in the chloroplast. In terms of biological role, binds together with bS18 to 16S ribosomal RNA. This is Small ribosomal subunit protein bS6c (rps6) from Cyanidium caldarium (Red alga).